The sequence spans 587 residues: 5-aminolevulinate synthase, erythroid-specific, mitochondrial (587 aa).

Residues 1 to 49 (MVAAAMLLRSCPVLSQGPTGLLGKVAKTYQFLFSIGRCPILATQGPTCS) constitute a mitochondrion transit peptide. Arg163 contributes to the succinyl-CoA binding site. Pyridoxal 5'-phosphate is bound by residues Cys258 and Phe259. The succinyl-CoA site is built by Ser280 and Lys299. Ser332, His360, and Thr388 together coordinate pyridoxal 5'-phosphate. Residue Lys391 is part of the active site. The residue at position 391 (Lys391) is an N6-(pyridoxal phosphate)lysine. 2 residues coordinate pyridoxal 5'-phosphate: Thr420 and Thr421. Thr508 is a succinyl-CoA binding site.

Belongs to the class-II pyridoxal-phosphate-dependent aminotransferase family. In terms of assembly, homodimer. Interacts with SUCLA2. Pyridoxal 5'-phosphate serves as cofactor. Predomnantly expressed in erythroid cells.

The protein resides in the mitochondrion inner membrane. It is found in the mitochondrion. It carries out the reaction succinyl-CoA + glycine + H(+) = 5-aminolevulinate + CO2 + CoA. It functions in the pathway porphyrin-containing compound metabolism; protoporphyrin-IX biosynthesis; 5-aminolevulinate from glycine: step 1/1. Its function is as follows. Catalyzes the pyridoxal 5'-phosphate (PLP)-dependent condensation of succinyl-CoA and glycine to form aminolevulinic acid (ALA), with CoA and CO2 as by-products. Contributes significantly to heme formation during erythropoiesis. The protein is 5-aminolevulinate synthase, erythroid-specific, mitochondrial (Alas2) of Mus musculus (Mouse).